A 347-amino-acid chain; its full sequence is GMP reductase (347 aa).

Aspartate 108–alanine 131 is an NADP(+) binding site. Positions 181 and 183 each coordinate K(+). Cysteine 186 serves as the catalytic Thioimidate intermediate. NADP(+) is bound at residue isoleucine 216–valine 239.

This sequence belongs to the IMPDH/GMPR family. GuaC type 1 subfamily. As to quaternary structure, homotetramer.

The enzyme catalyses IMP + NH4(+) + NADP(+) = GMP + NADPH + 2 H(+). Its function is as follows. Catalyzes the irreversible NADPH-dependent deamination of GMP to IMP. It functions in the conversion of nucleobase, nucleoside and nucleotide derivatives of G to A nucleotides, and in maintaining the intracellular balance of A and G nucleotides. In Aeromonas salmonicida (strain A449), this protein is GMP reductase.